The following is a 206-amino-acid chain: Superoxide dismutase [Mn] (206 aa).

4 residues coordinate Mn(2+): histidine 27, histidine 82, aspartate 168, and histidine 172.

The protein belongs to the iron/manganese superoxide dismutase family. In terms of assembly, homodimer. It depends on Mn(2+) as a cofactor.

The enzyme catalyses 2 superoxide + 2 H(+) = H2O2 + O2. Its function is as follows. Destroys superoxide anion radicals which are normally produced within the cells and which are toxic to biological systems. In Escherichia coli (strain K12), this protein is Superoxide dismutase [Mn] (sodA).